Reading from the N-terminus, the 715-residue chain is DNA-directed RNA polymerase subunit beta' (715 aa).

The Zn(2+) site is built by Cys-69, Cys-71, Cys-87, and Cys-90. The disordered stretch occupies residues 244–272; that stretch reads APESQSEVIEAQGPVPQAEEEKQRDQSIQ. Residues Asp-520, Asp-522, and Asp-524 each coordinate Mg(2+).

The protein belongs to the RNA polymerase beta' chain family. RpoC1 subfamily. As to quaternary structure, in plastids the minimal PEP RNA polymerase catalytic core is composed of four subunits: alpha, beta, beta', and beta''. When a (nuclear-encoded) sigma factor is associated with the core the holoenzyme is formed, which can initiate transcription. Mg(2+) is required as a cofactor. The cofactor is Zn(2+).

It is found in the plastid. Its subcellular location is the chloroplast. The catalysed reaction is RNA(n) + a ribonucleoside 5'-triphosphate = RNA(n+1) + diphosphate. Its function is as follows. DNA-dependent RNA polymerase catalyzes the transcription of DNA into RNA using the four ribonucleoside triphosphates as substrates. The polypeptide is DNA-directed RNA polymerase subunit beta' (Zygnema circumcarinatum (Green alga)).